The sequence spans 384 residues: SAGA complex subunit Spt3 (384 aa).

Belongs to the SPT3 family. Component of the Spt-Ada-Gcn5 acetyltransferase (SAGA) complex consisting of wda/Taf5L, Saf6, Taf9, Taf10b, Taf12, Ada1, Spt3, Spt7, Spt20, Sf3b3, Sf3b5, Nipped-A/Tra1, a histone acetyltransferase (HAT) module made up of Gcn5, Ada2b (Isoform B), Ada3 and Sgf29, and a deubiquitinase (DUB) module made up of not/nonstop, Sgf11 and e(y)2 tethered to SAGA by Atxn7. Taf5 and Taf10, which has partially redundant properties with Taf10b, may also be part of this complex.

Its subcellular location is the nucleus. The protein localises to the chromosome. Functionally, component of the transcription regulatory complex SAGA, a multiprotein complex that activates transcription by remodeling chromatin and mediating histone acetylation and deubiquitination. The SAGA complex predominantly acetylates histone H3. Required for oogenesis; involved in transcriptional activation. In Drosophila melanogaster (Fruit fly), this protein is SAGA complex subunit Spt3.